Reading from the N-terminus, the 867-residue chain is Elongation factor 2 (867 aa).

Positions 17–368 (HNIRNLSVVA…MIVLHLPSPV (352 aa)) constitute a tr-type G domain. Position 26 to 33 (26 to 33 (AHVDHGKS)) interacts with GTP. Phosphothreonine occurs at positions 57 and 59. Residues 176 to 179 (NKLD) and 231 to 233 (SGL) contribute to the GTP site. The residue at position 723 (histidine 723) is a Diphthamide.

It belongs to the TRAFAC class translation factor GTPase superfamily. Classic translation factor GTPase family. EF-G/EF-2 subfamily. In terms of processing, phosphorylation by EF-2 kinase completely inactivates EF-2.

It localises to the cytoplasm. It carries out the reaction GTP + H2O = GDP + phosphate + H(+). Functionally, catalyzes the GTP-dependent ribosomal translocation step during translation elongation. During this step, the ribosome changes from the pre-translocational (PRE) to the post-translocational (POST) state as the newly formed A-site-bound peptidyl-tRNA and P-site-bound deacylated tRNA move to the P and E sites, respectively. Catalyzes the coordinated movement of the two tRNA molecules, the mRNA and conformational changes in the ribosome. The protein is Elongation factor 2 of Blastocystis hominis.